We begin with the raw amino-acid sequence, 481 residues long: Protein nucleotidyltransferase YdiU (481 aa).

ATP contacts are provided by Gly87, Gly89, Arg90, Lys110, Asp122, Gly123, Arg173, and Arg180. Catalysis depends on Asp249, which acts as the Proton acceptor. Positions 250 and 259 each coordinate Mg(2+). An ATP-binding site is contributed by Asp259.

Belongs to the SELO family. Mg(2+) is required as a cofactor. It depends on Mn(2+) as a cofactor.

The catalysed reaction is L-seryl-[protein] + ATP = 3-O-(5'-adenylyl)-L-seryl-[protein] + diphosphate. The enzyme catalyses L-threonyl-[protein] + ATP = 3-O-(5'-adenylyl)-L-threonyl-[protein] + diphosphate. It catalyses the reaction L-tyrosyl-[protein] + ATP = O-(5'-adenylyl)-L-tyrosyl-[protein] + diphosphate. It carries out the reaction L-histidyl-[protein] + UTP = N(tele)-(5'-uridylyl)-L-histidyl-[protein] + diphosphate. The catalysed reaction is L-seryl-[protein] + UTP = O-(5'-uridylyl)-L-seryl-[protein] + diphosphate. The enzyme catalyses L-tyrosyl-[protein] + UTP = O-(5'-uridylyl)-L-tyrosyl-[protein] + diphosphate. In terms of biological role, nucleotidyltransferase involved in the post-translational modification of proteins. It can catalyze the addition of adenosine monophosphate (AMP) or uridine monophosphate (UMP) to a protein, resulting in modifications known as AMPylation and UMPylation. This chain is Protein nucleotidyltransferase YdiU, found in Mycobacterium sp. (strain KMS).